Consider the following 358-residue polypeptide: Bi-functional coumaroyl CoA and feruloyl CoA ortho-hydroxylase F6H2-2-1 (358 aa).

A Fe2OG dioxygenase domain is found at 200 to 308 (SKESLLMGSR…RISVPVFVNP (109 aa)). Residue tyrosine 216 participates in 2-oxoglutarate binding. Histidine 231, aspartate 233, and histidine 289 together coordinate Fe cation. 2-oxoglutarate-binding residues include arginine 299 and serine 301.

The protein belongs to the iron/ascorbate-dependent oxidoreductase family. L-ascorbate serves as cofactor. It depends on Fe(2+) as a cofactor. In terms of tissue distribution, mostly expressed in underground stems and stems.

The catalysed reaction is (E)-4-coumaroyl-CoA + 2-oxoglutarate + O2 = (E)-2,4-dihydroxycinnamoyl-CoA + succinate + CO2. The enzyme catalyses (E)-feruloyl-CoA + 2-oxoglutarate + O2 = (E)-6-hydroxyferuloyl-CoA + succinate + CO2. The protein operates within phenylpropanoid metabolism. 2-oxoglutarate (OG)- and Fe(II)-dependent dioxygenase (2OGD) involved in scopoletin and umbelliferone biosynthesis. Converts feruloyl CoA into 6'-hydroxyferuloyl CoA, and p-coumaroyl CoA into 2,4-dihydroxycinnamoyl-CoA, but has no activity toward caffeoyl-CoA. This is Bi-functional coumaroyl CoA and feruloyl CoA ortho-hydroxylase F6H2-2-1 from Ipomoea batatas (Sweet potato).